The following is a 346-amino-acid chain: Holliday junction branch migration complex subunit RuvB (346 aa).

The interval 1 to 182 (MSEPARLISP…FGIPVRLSFY (182 aa)) is large ATPase domain (RuvB-L). Residues Leu-21, Arg-22, Gly-63, Lys-66, Thr-67, Thr-68, 129-131 (EDF), Arg-172, Tyr-182, and Arg-219 each bind ATP. Thr-67 contributes to the Mg(2+) binding site. Positions 183 to 253 (TVEELELIVR…IADEALTRLL (71 aa)) are small ATPAse domain (RuvB-S). The head domain (RuvB-H) stretch occupies residues 256 to 346 (NVGFDQLDKR…AQFRLFQEDD (91 aa)). DNA-binding residues include Arg-292, Arg-311, and Arg-316.

Belongs to the RuvB family. Homohexamer. Forms an RuvA(8)-RuvB(12)-Holliday junction (HJ) complex. HJ DNA is sandwiched between 2 RuvA tetramers; dsDNA enters through RuvA and exits via RuvB. An RuvB hexamer assembles on each DNA strand where it exits the tetramer. Each RuvB hexamer is contacted by two RuvA subunits (via domain III) on 2 adjacent RuvB subunits; this complex drives branch migration. In the full resolvosome a probable DNA-RuvA(4)-RuvB(12)-RuvC(2) complex forms which resolves the HJ.

Its subcellular location is the cytoplasm. The catalysed reaction is ATP + H2O = ADP + phosphate + H(+). Functionally, the RuvA-RuvB-RuvC complex processes Holliday junction (HJ) DNA during genetic recombination and DNA repair, while the RuvA-RuvB complex plays an important role in the rescue of blocked DNA replication forks via replication fork reversal (RFR). RuvA specifically binds to HJ cruciform DNA, conferring on it an open structure. The RuvB hexamer acts as an ATP-dependent pump, pulling dsDNA into and through the RuvAB complex. RuvB forms 2 homohexamers on either side of HJ DNA bound by 1 or 2 RuvA tetramers; 4 subunits per hexamer contact DNA at a time. Coordinated motions by a converter formed by DNA-disengaged RuvB subunits stimulates ATP hydrolysis and nucleotide exchange. Immobilization of the converter enables RuvB to convert the ATP-contained energy into a lever motion, pulling 2 nucleotides of DNA out of the RuvA tetramer per ATP hydrolyzed, thus driving DNA branch migration. The RuvB motors rotate together with the DNA substrate, which together with the progressing nucleotide cycle form the mechanistic basis for DNA recombination by continuous HJ branch migration. Branch migration allows RuvC to scan DNA until it finds its consensus sequence, where it cleaves and resolves cruciform DNA. In Rhizobium etli (strain CIAT 652), this protein is Holliday junction branch migration complex subunit RuvB.